The following is a 360-amino-acid chain: Probable L-asparaginase 1 (360 aa).

A signal peptide spans 1 to 16; the sequence is MWRSIISFLFFSVALC. 3 N-linked (GlcNAc...) asparagine glycosylation sites follow: Asn-27, Asn-35, and Asn-40. Residues 39–359 form the Asparaginase/glutaminase domain; sequence PNVTIFAMGG…QNITDIFSLE (321 aa). Residue Thr-49 is the O-isoaspartyl threonine intermediate of the active site. The N-linked (GlcNAc...) asparagine glycan is linked to Asn-82. Residue Ser-96 coordinates substrate. Asn-106 is a glycosylation site (N-linked (GlcNAc...) asparagine). Residue 129-130 participates in substrate binding; it reads TD. N-linked (GlcNAc...) asparagine glycosylation is found at Asn-144, Asn-179, Asn-246, Asn-302, and Asn-351.

This sequence belongs to the asparaginase 1 family.

It is found in the secreted. The protein resides in the cell wall. It catalyses the reaction L-asparagine + H2O = L-aspartate + NH4(+). This chain is Probable L-asparaginase 1, found in Schizosaccharomyces pombe (strain 972 / ATCC 24843) (Fission yeast).